Reading from the N-terminus, the 809-residue chain is Ferric-pyoverdine BN7/BN8 receptor (809 aa).

The N-terminal stretch at 1 to 45 (MNHTARKRQGWQRSVSQKLAGAVVQGIACMGASAPLLLMPAWATA) is a signal peptide. Positions 166 to 273 (TPRETPQSLT…PSATINLIRK (108 aa)) constitute a TBDR plug domain. Residues 278 to 809 (EAQASITGEA…NVMTSFKYSF (532 aa)) enclose the TBDR beta-barrel domain. A TonB C-terminal box motif is present at residues 792–809 (YGVYGTPRNVMTSFKYSF).

This sequence belongs to the TonB-dependent receptor family.

It localises to the cell outer membrane. Functionally, specific receptor for the siderophores ferric pyoverdines (pseudobactins) BN8 and BN7, iron chelating molecules that allow the organism to extract iron from the environment, especially under iron-restricted conditions. This is Ferric-pyoverdine BN7/BN8 receptor (pupB) from Pseudomonas putida (Arthrobacter siderocapsulatus).